Here is a 766-residue protein sequence, read N- to C-terminus: Protein STB6 (766 aa).

The tract at residues 447–469 is disordered; that stretch reads VPSEQLTTSNKEDSDTQPTKRNS. Ser-514 is modified (phosphoserine).

To yeast STB2.

In terms of biological role, binds to SIN3. The polypeptide is Protein STB6 (STB6) (Saccharomyces cerevisiae (strain ATCC 204508 / S288c) (Baker's yeast)).